We begin with the raw amino-acid sequence, 598 residues long: Probable translation initiation factor IF-2 (598 aa).

The region spanning 3–225 is the tr-type G domain; it reads LRCPIVSVLG…GLAQKFLEQK (223 aa). The tract at residues 12 to 19 is G1; it reads GHVDHGKT. A GTP-binding site is contributed by 12–19; sequence GHVDHGKT. A G2 region spans residues 37 to 41; the sequence is GITQH. The interval 76-79 is G3; it reads DTPG. GTP-binding positions include 76-80 and 130-133; these read DTPGH and NKLD. Positions 130–133 are G4; it reads NKLD. The tract at residues 200-202 is G5; it reads SAM.

This sequence belongs to the TRAFAC class translation factor GTPase superfamily. Classic translation factor GTPase family. IF-2 subfamily.

Function in general translation initiation by promoting the binding of the formylmethionine-tRNA to ribosomes. Seems to function along with eIF-2. This Methanococcus maripaludis (strain C6 / ATCC BAA-1332) protein is Probable translation initiation factor IF-2.